A 161-amino-acid polypeptide reads, in one-letter code: Nucleotide-binding protein PputW619_0959 (161 aa).

It belongs to the YajQ family.

Its function is as follows. Nucleotide-binding protein. The polypeptide is Nucleotide-binding protein PputW619_0959 (Pseudomonas putida (strain W619)).